The sequence spans 449 residues: Adenylyltransferase and sulfurtransferase MOCS3 (449 aa).

ATP is bound by residues glycine 96, aspartate 117, 124–128 (SNLHR), lysine 141, and 185–186 (DN). The Zn(2+) site is built by cysteine 227 and cysteine 230. Cysteine 244 functions as the Glycyl thioester intermediate; for adenylyltransferase activity in the catalytic mechanism. Positions 302 and 305 each coordinate Zn(2+). Residues 351–447 (QDKPHLLLDV…WTNQIDENFP (97 aa)) form the Rhodanese domain. Residue cysteine 406 is the Cysteine persulfide intermediate; for sulfurtransferase activity of the active site.

In the N-terminal section; belongs to the HesA/MoeB/ThiF family. UBA4 subfamily. Zn(2+) serves as cofactor.

Its subcellular location is the cytoplasm. It is found in the cytosol. The enzyme catalyses [molybdopterin-synthase sulfur-carrier protein]-C-terminal Gly-Gly + ATP + H(+) = [molybdopterin-synthase sulfur-carrier protein]-C-terminal Gly-Gly-AMP + diphosphate. It catalyses the reaction [molybdopterin-synthase sulfur-carrier protein]-C-terminal Gly-Gly-AMP + S-sulfanyl-L-cysteinyl-[cysteine desulfurase] + AH2 = [molybdopterin-synthase sulfur-carrier protein]-C-terminal-Gly-aminoethanethioate + L-cysteinyl-[cysteine desulfurase] + A + AMP + 2 H(+). It functions in the pathway tRNA modification; 5-methoxycarbonylmethyl-2-thiouridine-tRNA biosynthesis. It participates in cofactor biosynthesis; molybdopterin biosynthesis. In terms of biological role, plays a central role in 2-thiolation of mcm(5)S(2)U at tRNA wobble positions of cytosolic tRNA(Lys), tRNA(Glu) and tRNA(Gln). Also essential during biosynthesis of the molybdenum cofactor. Acts by mediating the C-terminal thiocarboxylation of sulfur carriers URM1 and MOCS2A. Its N-terminus first activates URM1 and MOCS2A as acyl-adenylates (-COAMP), then the persulfide sulfur on the catalytic cysteine is transferred to URM1 and MOCS2A to form thiocarboxylation (-COSH) of their C-terminus. The reaction probably involves hydrogen sulfide that is generated from the persulfide intermediate and that acts as a nucleophile towards URM1 and MOCS2A. Subsequently, a transient disulfide bond is formed. Does not use thiosulfate as sulfur donor; NFS1 probably acting as a sulfur donor for thiocarboxylation reactions. The sequence is that of Adenylyltransferase and sulfurtransferase MOCS3 from Drosophila grimshawi (Hawaiian fruit fly).